We begin with the raw amino-acid sequence, 301 residues long: uncharacterized protein (301 aa).

2 disordered regions span residues 56–126 (ESPT…ESDL) and 149–173 (LSTE…DASS). Residues 71-82 (VQKENQKPKDLN) are compositionally biased toward basic and acidic residues. Residues 93–102 (KNSSGLVSQI) are compositionally biased toward polar residues. The segment covering 161 to 173 (SNTSSSSMSDASS) has biased composition (low complexity).

This is an uncharacterized protein from Caenorhabditis elegans.